The primary structure comprises 47 residues: uncharacterized protein (47 aa).

The disordered stretch occupies residues 19–47 (EKVLKNQNPDRLSHMTDKNAQPKSKEKEE).

This is an uncharacterized protein from Bacillus subtilis (strain 168).